The chain runs to 1649 residues: eIF-2-alpha kinase GCN2 (1649 aa).

3 disordered regions span residues Met-1–His-25, Asn-138–Gln-158, and His-227–Cys-256. Residues His-25–His-137 enclose the RWD domain. The stretch at His-146 to Ser-205 forms a coiled coil. Ser-230 carries the post-translational modification Phosphoserine. A compositionally biased stretch (basic residues) spans Gly-237–Arg-249. Protein kinase domains are found at residues Val-296–Ile-539 and Phe-590–Leu-1001. Residues Leu-596–Val-604 and Lys-619 contribute to the ATP site. Disordered stretches follow at residues Glu-660–Leu-750 and Glu-766–Pro-788. A Phosphothreonine modification is found at Thr-667. Polar residues predominate over residues Leu-705–Arg-717. Acidic residues predominate over residues Ser-731–Glu-740. Residues Asn-778–Glu-787 are compositionally biased toward basic and acidic residues. The active-site Proton acceptor is Asp-848. At Thr-871 the chain carries Phosphothreonine. A phosphothreonine; by autocatalysis mark is found at Thr-899 and Thr-904. Residues Val-1022–Lys-1493 form a histidyl-tRNA synthetase-like region. Lys-1259 bears the N6-acetyllysine mark.

Belongs to the protein kinase superfamily. Ser/Thr protein kinase family. GCN2 subfamily. Homodimer; homodimerization is important for kinase activation by uncharged tRNAs. Interacts with GCN1; this interaction stimulates EIF2AK4/GCN2 kinase activity and is impaired by IMPACT upon a variety of stress conditions, such as amino acid depletion, UV-C irradiation, proteasome inhibitor treatment and glucose deprivation. Interacts with DNAJC3; this interaction inhibits EIF2AK4/GCN2 kinase activity during endoplasmic reticulum (ER), hypothermic and amino acid-starving stress conditions. Interacts with MAP3K20; activates EIF2AK4/GCN2 kinase activity in response to moderate ribotoxic stress. In terms of assembly, (Microbial infection) Interacts with hepatitis E virus (HEV) ORF1 protease; this interaction inhibits dimerization of EIF2AK4 and prevents EIF2AK4-mediated phosphorylation of EIF2A. Post-translationally, autophosphorylated; autophosphorylation on Thr-899 is increased upon amino acid starvation and in UV irradiation cells and inhibited in presence of IMPACT. Widely expressed. Expressed in lung, smooth muscle cells and macrophages.

The protein localises to the cytoplasm. The catalysed reaction is L-seryl-[protein] + ATP = O-phospho-L-seryl-[protein] + ADP + H(+). It carries out the reaction L-threonyl-[protein] + ATP = O-phospho-L-threonyl-[protein] + ADP + H(+). In terms of biological role, metabolic-stress sensing protein kinase that phosphorylates the alpha subunit of eukaryotic translation initiation factor 2 (EIF2S1/eIF-2-alpha) in response to low amino acid availability. Plays a role as an activator of the integrated stress response (ISR) required for adaptation to amino acid starvation. EIF2S1/eIF-2-alpha phosphorylation in response to stress converts EIF2S1/eIF-2-alpha into a global protein synthesis inhibitor, leading to a global attenuation of cap-dependent translation, and thus to a reduced overall utilization of amino acids, while concomitantly initiating the preferential translation of ISR-specific mRNAs, such as the transcriptional activator ATF4, and hence allowing ATF4-mediated reprogramming of amino acid biosynthetic gene expression to alleviate nutrient depletion. Binds uncharged tRNAs. Required for the translational induction of protein kinase PRKCH following amino acid starvation. Involved in cell cycle arrest by promoting cyclin D1 mRNA translation repression after the unfolded protein response pathway (UPR) activation or cell cycle inhibitor CDKN1A/p21 mRNA translation activation in response to amino acid deprivation. Plays a role in the consolidation of synaptic plasticity, learning as well as formation of long-term memory. Plays a role in neurite outgrowth inhibition. Plays a proapoptotic role in response to glucose deprivation. Promotes global cellular protein synthesis repression in response to UV irradiation independently of the stress-activated protein kinase/c-Jun N-terminal kinase (SAPK/JNK) and p38 MAPK signaling pathways. Plays a role in the antiviral response against alphavirus infection; impairs early viral mRNA translation of the incoming genomic virus RNA, thus preventing alphavirus replication. Functionally, (Microbial infection) Plays a role in modulating the adaptive immune response to yellow fever virus infection; promotes dendritic cells to initiate autophagy and antigene presentation to both CD4(+) and CD8(+) T-cells under amino acid starvation. This Homo sapiens (Human) protein is eIF-2-alpha kinase GCN2.